Reading from the N-terminus, the 230-residue chain is Endonuclease NucS (230 aa).

Belongs to the NucS endonuclease family.

The protein resides in the cytoplasm. Cleaves both 3' and 5' ssDNA extremities of branched DNA structures. The sequence is that of Endonuclease NucS from Corynebacterium glutamicum (strain ATCC 13032 / DSM 20300 / JCM 1318 / BCRC 11384 / CCUG 27702 / LMG 3730 / NBRC 12168 / NCIMB 10025 / NRRL B-2784 / 534).